Consider the following 139-residue polypeptide: Large ribosomal subunit protein uL16 (139 aa).

It belongs to the universal ribosomal protein uL16 family. In terms of assembly, part of the 50S ribosomal subunit.

Functionally, binds 23S rRNA and is also seen to make contacts with the A and possibly P site tRNAs. This Synechocystis sp. (strain ATCC 27184 / PCC 6803 / Kazusa) protein is Large ribosomal subunit protein uL16.